Reading from the N-terminus, the 233-residue chain is Large ribosomal subunit protein uL1 (233 aa).

The protein belongs to the universal ribosomal protein uL1 family. In terms of assembly, part of the 50S ribosomal subunit.

In terms of biological role, binds directly to 23S rRNA. The L1 stalk is quite mobile in the ribosome, and is involved in E site tRNA release. Protein L1 is also a translational repressor protein, it controls the translation of the L11 operon by binding to its mRNA. This Shewanella pealeana (strain ATCC 700345 / ANG-SQ1) protein is Large ribosomal subunit protein uL1.